The sequence spans 323 residues: uncharacterized protein (323 aa).

The tract at residues 1–21 is disordered; it reads MGSYYSTESTKSNESNETTNN. G2 is lipidated: N-myristoyl glycine; by host.

This is an uncharacterized protein from Acanthamoeba polyphaga (Amoeba).